The sequence spans 473 residues: MKTLYSLRRFYHVETLFNGTLAVTGRDQETTGFAWWAGNARLINLSGKLLGAHVAHAGLIVFWAGAMNLFEVAHFVPEKPMYEQGLILLPHLATLGWGVGPGGEVTDTFPYFVSGVLHLISSAVLGFGGIYHALLGPETLEESFPFFGYVWKDRNKMTTILGIHLILLGLGAFLLVFKALYFGGVYDTWAPGGGDVRKITNLTLSPSILFGYLLKSPFGGEGWIVSVDDLEDIIGGHVWLGSICILGGIWHILTKPFAWARRALVWSGEAYLSYSLGALSAFGFIACCFVCFNNTAYPSEFYGPTGPEASQAQAFTFLVRDQRLGANVGSAQGPTGLGKYLMRSPTGEVIFGGETMRFWDLRAPWLEPLRGPNGLDLSRLKKDIQPWQERRSAEYMTHAPLGSLNSVGGVATEINAVNYVSPRSWLATSHFVLGFFFFVGHLWHAGRARAAAAGFEKGIDRDFEPVLSMTPLN.

Residues 1–14 constitute a propeptide that is removed on maturation; it reads MKTLYSLRRFYHVE. Threonine 15 is subject to N-acetylthreonine. Threonine 15 is modified (phosphothreonine). 5 helical membrane-spanning segments follow: residues 69–93, 134–155, 178–200, 255–275, and 291–312; these read LFEV…PHLA, LLGP…KDRN, KALY…RKIT, KPFA…LSYS, and CFNN…ASQA. Glutamate 367 serves as a coordination point for [CaMn4O5] cluster. Residues 447 to 471 form a helical membrane-spanning segment; the sequence is RARAAAAGFEKGIDRDFEPVLSMTP.

It belongs to the PsbB/PsbC family. PsbC subfamily. PSII is composed of 1 copy each of membrane proteins PsbA, PsbB, PsbC, PsbD, PsbE, PsbF, PsbH, PsbI, PsbJ, PsbK, PsbL, PsbM, PsbT, PsbX, PsbY, PsbZ, Psb30/Ycf12, at least 3 peripheral proteins of the oxygen-evolving complex and a large number of cofactors. It forms dimeric complexes. The cofactor is Binds multiple chlorophylls and provides some of the ligands for the Ca-4Mn-5O cluster of the oxygen-evolving complex. It may also provide a ligand for a Cl- that is required for oxygen evolution. PSII binds additional chlorophylls, carotenoids and specific lipids..

The protein resides in the plastid. The protein localises to the chloroplast thylakoid membrane. In terms of biological role, one of the components of the core complex of photosystem II (PSII). It binds chlorophyll and helps catalyze the primary light-induced photochemical processes of PSII. PSII is a light-driven water:plastoquinone oxidoreductase, using light energy to abstract electrons from H(2)O, generating O(2) and a proton gradient subsequently used for ATP formation. This is Photosystem II CP43 reaction center protein from Jasminum nudiflorum (Winter jasmine).